We begin with the raw amino-acid sequence, 349 residues long: E3 ubiquitin-protein ligase SINA-like 10 (349 aa).

The segment at 1–77 (MARFSVCGGD…STSDDSDREV (77 aa)) is disordered. The RING-type; degenerate zinc-finger motif lies at 113-149 (CPICCEPLKIPIFQCDNGHLACTLCCTKVRNRCPSCT). Residues 163–344 (VIEASRVSCL…NLQIWIGHGR (182 aa)) form an SBD region. The SIAH-type zinc-finger motif lies at 166–224 (ASRVSCLNAKYGCKESTSYGNRFSHEQVCVFTPCSCPILDCHYTGYYKDLNNHVRAEHK). Residues Cys-171, Cys-178, His-190, Cys-194, Cys-201, Cys-206, His-218, and His-223 each coordinate Zn(2+).

This sequence belongs to the SINA (Seven in absentia) family.

The enzyme catalyses S-ubiquitinyl-[E2 ubiquitin-conjugating enzyme]-L-cysteine + [acceptor protein]-L-lysine = [E2 ubiquitin-conjugating enzyme]-L-cysteine + N(6)-ubiquitinyl-[acceptor protein]-L-lysine.. It functions in the pathway protein modification; protein ubiquitination. E3 ubiquitin-protein ligase that mediates ubiquitination and subsequent proteasomal degradation of target proteins. E3 ubiquitin ligases accept ubiquitin from an E2 ubiquitin-conjugating enzyme in the form of a thioester and then directly transfers the ubiquitin to targeted substrates. It probably triggers the ubiquitin-mediated degradation of different substrates. This chain is E3 ubiquitin-protein ligase SINA-like 10, found in Arabidopsis thaliana (Mouse-ear cress).